Reading from the N-terminus, the 110-residue chain is Late cornified envelope-like proline-rich protein 1 (110 aa).

Residues 1 to 24 (MSSDDKNKPGEPKNEPKQCDPGCE) form a disordered region.

This sequence belongs to the cornifin (SPRR) family.

This is Late cornified envelope-like proline-rich protein 1 (LELP1) from Bos taurus (Bovine).